Consider the following 214-residue polypeptide: UPF0502 protein Spro_2794 (214 aa).

The protein belongs to the UPF0502 family.

In Serratia proteamaculans (strain 568), this protein is UPF0502 protein Spro_2794.